A 387-amino-acid chain; its full sequence is Xylose operon regulatory protein (387 aa).

The region spanning 288–386 (IQAMHYIRHR…EMTPKEFRLN (99 aa)) is the HTH araC/xylS-type domain. 2 DNA-binding regions (H-T-H motif) span residues 305–326 (GQVL…KNEM) and 353–376 (IKEI…KKEF).

Its function is as follows. Regulatory protein for the xylBAFGHR operon. This chain is Xylose operon regulatory protein (xylR), found in Haemophilus influenzae (strain ATCC 51907 / DSM 11121 / KW20 / Rd).